We begin with the raw amino-acid sequence, 77 residues long: U10-lycotoxin-Ls1d (77 aa).

Positions 1–20 are cleaved as a signal peptide; the sequence is MKLIIFTGLFLFAIVSLIEA. Positions 21 to 26 are excised as a propeptide; that stretch reads EEESGR.

This sequence belongs to the neurotoxin 19 (CSTX) family. 09 (U10-Lctx) subfamily. In terms of processing, contains 4 disulfide bonds. In terms of tissue distribution, expressed by the venom gland.

The protein localises to the secreted. This is U10-lycotoxin-Ls1d from Lycosa singoriensis (Wolf spider).